The primary structure comprises 282 residues: MTVGRAESPELVAVLAGRRIAVLTGAGISTDSGIPDYRGPESPPSNPMTIRQFTGDPAFRQRYWARNHVGWRHMDDTLPNAGHRALAALEDAAVVTGVITQNVDLLHTKAGSRNVIDLHGSYARVICLGCGDTTSRAALAERLEALNPGFIERTEAIGGLAVAPDADAVVAETASFRYVDCARCAGMLKPDIVYFGESVPKDVVAAAYRLIDESDTLLVAGSSLTVFSGYRFVRHAAARGIPIAIVNRGDTRGDHLATVKVDGGCSELLALLADELSPLPTH.

Residues 1-282 enclose the Deacetylase sirtuin-type domain; it reads MTVGRAESPE…ADELSPLPTH (282 aa). NAD(+)-binding positions include 25–45 and 101–104; these read GAGISTDSGIPDYRGPESPPS and QNVD. The Proton acceptor role is filled by His119. Residues Cys127, Cys130, Cys181, and Cys184 each coordinate Zn(2+). NAD(+) is bound by residues 221–223, 247–249, and Cys265; these read GSS and NRG.

This sequence belongs to the sirtuin family. Class II subfamily. It depends on Zn(2+) as a cofactor.

The protein localises to the cytoplasm. It catalyses the reaction N(6)-acetyl-L-lysyl-[protein] + NAD(+) + H2O = 2''-O-acetyl-ADP-D-ribose + nicotinamide + L-lysyl-[protein]. NAD-dependent protein deacetylase which modulates the activities of several enzymes which are inactive in their acetylated form. This Mycobacterium avium (strain 104) protein is NAD-dependent protein deacetylase 1.